Reading from the N-terminus, the 269-residue chain is Phosphate import ATP-binding protein PstB 2 (269 aa).

An ABC transporter domain is found at 23-264 (LEVKDLSIYY…PKKQKTEDYI (242 aa)). 55-62 (GPSGCGKS) is an ATP binding site.

It belongs to the ABC transporter superfamily. Phosphate importer (TC 3.A.1.7) family. As to quaternary structure, the complex is composed of two ATP-binding proteins (PstB), two transmembrane proteins (PstC and PstA) and a solute-binding protein (PstS).

The protein resides in the cell membrane. It carries out the reaction phosphate(out) + ATP + H2O = ADP + 2 phosphate(in) + H(+). Functionally, part of the ABC transporter complex PstSACB involved in phosphate import. Responsible for energy coupling to the transport system. The protein is Phosphate import ATP-binding protein PstB 2 of Bacillus subtilis (strain 168).